A 932-amino-acid polypeptide reads, in one-letter code: von Willebrand factor A domain-containing protein DDB_G0292028 (932 aa).

The tract at residues 1–49 is disordered; the sequence is MNFIKKVIGGGSSKSKTDIKIEDEQHEQQHEQQHEKQQIPDKISTSKVN. A compositionally biased stretch (basic and acidic residues) spans 15 to 39; sequence SKTDIKIEDEQHEQQHEQQHEKQQI. A VIT domain is found at 95-222; it reads LTSPGLNTKV…DVTVNITITS (128 aa). In terms of domain architecture, VWFA spans 342-521; sequence EFIFVLDCSG…IAMQPTLSNI (180 aa). Disordered regions lie at residues 661-752 and 800-834; these read QQIN…SQAQ and TSQI…STSS. A compositionally biased stretch (polar residues) spans 677 to 686; the sequence is TRVQGSSSVF. The segment covering 815 to 834 has biased composition (low complexity); sequence SSSPTIQKSSSLPSRPSTSS.

This chain is von Willebrand factor A domain-containing protein DDB_G0292028, found in Dictyostelium discoideum (Social amoeba).